Reading from the N-terminus, the 504-residue chain is Maturase K (504 aa).

The protein belongs to the intron maturase 2 family. MatK subfamily.

The protein resides in the plastid. It localises to the chloroplast. Its function is as follows. Usually encoded in the trnK tRNA gene intron. Probably assists in splicing its own and other chloroplast group II introns. The protein is Maturase K of Olimarabidopsis pumila (Dwarf rocket).